The following is a 68-amino-acid chain: Protein transport protein Sec61 subunit gamma (68 aa).

At 1-32 (MDQVTKFIEPGRQFAKDSIRLVKRCTKPDRKE) the chain is on the cytoplasmic side. A helical transmembrane segment spans residues 33–61 (FQKIAVATAIGFCIMGFIGFFVKLIHIPI). Topologically, residues 62–68 (NNIIVGS) are extracellular.

The protein belongs to the SecE/SEC61-gamma family. As to quaternary structure, heterotrimeric complex composed of SEC61-alpha, SEC61-beta and SEC61-gamma.

The protein localises to the endoplasmic reticulum membrane. Its function is as follows. Necessary for protein translocation in the endoplasmic reticulum. The chain is Protein transport protein Sec61 subunit gamma (SEC61G) from Gryllotalpa orientalis (Oriental mole cricket).